The sequence spans 738 residues: Exocyst complex component 3 (738 aa).

A coiled-coil region spans residues 28 to 91 (LEKVEQYRHR…DEVERLLRGV (64 aa)).

It belongs to the SEC6 family. As to quaternary structure, the exocyst complex is composed of Sec3/Exoc1, Sec5/Exoc2, Sec6/Exoc3, Sec8/Exoc4, Sec10/Exoc5, Sec15/Exoc6, Exo70/Exoc7 and Exo84/Exoc8.

Component of the exocyst complex involved in the docking of exocytic vesicles with fusion sites on the plasma membrane. The protein is Exocyst complex component 3 of Drosophila melanogaster (Fruit fly).